The chain runs to 213 residues: Small ribosomal subunit protein uS3 (213 aa).

The KH type-2 domain occupies 38–106 (IRKYVKKTLY…EFSIEVNEIR (69 aa)).

The protein belongs to the universal ribosomal protein uS3 family. Part of the 30S ribosomal subunit. Forms a tight complex with proteins S10 and S14.

Its function is as follows. Binds the lower part of the 30S subunit head. Binds mRNA in the 70S ribosome, positioning it for translation. The chain is Small ribosomal subunit protein uS3 from Oleidesulfovibrio alaskensis (strain ATCC BAA-1058 / DSM 17464 / G20) (Desulfovibrio alaskensis).